The sequence spans 549 residues: Adhesion G protein-coupled receptor G3 (549 aa).

Positions 1-20 (MATPRGLGALLLLLLLPTSG) are cleaved as a signal peptide. Residues 21–270 (QEKPTEGPRN…DQSTVHILTR (250 aa)) are Extracellular-facing. N-linked (GlcNAc...) asparagine glycans are attached at residues N98, N144, and N210. One can recognise a GAIN-B domain in the interval 107 to 262 (FYFSLEPSQV…ALLLRPTLDQ (156 aa)). 2 cysteine pairs are disulfide-bonded: C215–C244 and C233–C246. The GPS stretch occupies residues 215–262 (CVFWDVTKGTTGDWSSEGCSTEVRPEGTVCCCDHLTFFALLLRPTLDQ). The segment at 251–259 (FFALLLRPT) is stachel. The helical transmembrane segment at 271 to 295 (ISQAGCGVSMIFLAFTIILYAFLRL) threads the bilayer. Residues 296 to 304 (SRERFKSED) are Cytoplasmic-facing. The chain crosses the membrane as a helical span at residues 305–326 (APKIHVALGGSLFLLNLAFLVN). The Extracellular portion of the chain corresponds to 327–338 (VGSGSKGSDAAC). C338 and C420 are disulfide-bonded. The helical transmembrane segment at 339–364 (WARGAVFHYFLLCAFTWMGLEAFHLY) threads the bilayer. Over 365-378 (LLAVRVFNTYFGHY) the chain is Cytoplasmic. The chain crosses the membrane as a helical span at residues 379–400 (FLKLSLVGWGLPALMVIGTGSA). At 401-428 (NSYGLYTIRDRENRTSLELCWFREGTTM) the chain is on the extracellular side. A glycan (N-linked (GlcNAc...) asparagine) is linked at N413. Residues 429-454 (YALYITVHGYFLITFLFGMVVLALVV) form a helical membrane-spanning segment. Topologically, residues 455–474 (WKIFTLSRATAVKERGKNRK) are cytoplasmic. A helical membrane pass occupies residues 475 to 495 (KVLTLLGLSSLVGVTWGLAIF). Residues 496–501 (TPLGLS) are Extracellular-facing. The helical transmembrane segment at 502-525 (TVYIFALFNSLQGVFICCWFTILY) threads the bilayer. Cortisol is bound at residue N510. Residues 526–549 (LPSQSTTVSSSTARLDQAHSASQE) lie on the Cytoplasmic side of the membrane.

The protein belongs to the G-protein coupled receptor 2 family. Adhesion G-protein coupled receptor (ADGR) subfamily. In terms of assembly, heterodimer of 2 chains generated by proteolytic processing; the large extracellular N-terminal fragment and the membrane-bound C-terminal fragment predominantly remain associated and non-covalently linked. Interacts with PRTN3; this interaction induces the activation of PAR2. Interacts with GNAO1 (when palmitoylated). Post-translationally, autoproteolytically processed at the GPS region of the GAIN-B domain; this cleavage modulates receptor activity. In terms of processing, O- and N-glycosylated. Expressed in cultured primary dermal lymphatic endothelial cells. Highly expressed in polymorphonuclear cells (PMNs) including neutrophilic, eosinophilic, and basophilic granulocytes.

The protein localises to the cell membrane. Forms a heterodimer of 2 chains generated by proteolytic processing that remain associated through non-covalent interactions mediated by the GAIN-B domain. In the inactivated receptor, the Stachel sequence (also named stalk) is embedded in the GAIN-B domain, where it adopts a beta-strand conformation. On activation, the Stachel moves into the 7 transmembrane region and adopts a twisted hook-shaped configuration that forms contacts within the receptor, leading to coupling of a G-alpha protein, which activates signaling. The cleaved GAIN-B and N-terminal domains can then dissociate from the rest of the receptor. Adhesion G-protein coupled receptor (aGPCR) for glucocorticoid hormones such as cortisol, cortisone and 11-deoxycortisol. Ligand binding causes a conformation change that triggers signaling via guanine nucleotide-binding proteins (G proteins) and modulates the activity of downstream effectors, such as adenylate cyclase. ADGRG3/GPR97 is coupled to G(o)/GNAO1 G proteins and mediates signaling by inhibiting adenylate cyclase activity. May also signal through G-alpha(q)-proteins; additional evidence are however required to confirm this result in vivo. Plays a role in the regulation of various processes including B-cell development, inflammation or innate immunity. Regulates migration of lymphatic endothelial cells in vitro via the small GTPases RhoA and CDC42. Antibody ligation leads to the production and activation of antimicrobial mediators like reactive oxygen species (ROS) and myeloperoxidase (MPO) as well as enhanced bacteria uptake and killing by granulocytes. Additionally, collaborates with protease-activated receptor 2/PAR2 to stimulate neutrophil-driven antimicrobial responses and endothelial cell activation. This Homo sapiens (Human) protein is Adhesion G protein-coupled receptor G3.